Reading from the N-terminus, the 394-residue chain is Uroporphyrinogen decarboxylase 2, chloroplastic (394 aa).

Residues 74-78, Phe93, Ser123, Asp124, Tyr201, Ser256, and His371 each bind substrate; that span reads RQAGR.

This sequence belongs to the uroporphyrinogen decarboxylase family. As to quaternary structure, homodimer.

The protein localises to the plastid. Its subcellular location is the chloroplast. It carries out the reaction uroporphyrinogen III + 4 H(+) = coproporphyrinogen III + 4 CO2. It participates in porphyrin-containing compound metabolism; protoporphyrin-IX biosynthesis; coproporphyrinogen-III from 5-aminolevulinate: step 4/4. It functions in the pathway porphyrin-containing compound metabolism; chlorophyll biosynthesis. Catalyzes the decarboxylation of four acetate groups of uroporphyrinogen-III to yield coproporphyrinogen-III. The polypeptide is Uroporphyrinogen decarboxylase 2, chloroplastic (HEME2) (Arabidopsis thaliana (Mouse-ear cress)).